The chain runs to 89 residues: Cell division topological specificity factor (89 aa).

This sequence belongs to the MinE family.

Prevents the cell division inhibition by proteins MinC and MinD at internal division sites while permitting inhibition at polar sites. This ensures cell division at the proper site by restricting the formation of a division septum at the midpoint of the long axis of the cell. The chain is Cell division topological specificity factor from Klebsiella pneumoniae subsp. pneumoniae (strain ATCC 700721 / MGH 78578).